The following is a 151-amino-acid chain: Potassium/proton antiporter CemA (151 aa).

The next 2 helical transmembrane spans lie at 7–27 and 107–127; these read LPSLLYLVFIVLLPWGVSSSF and ILHFSTNIICLAILSGSFFLG.

This sequence belongs to the CemA family.

The protein localises to the plastid. The protein resides in the chloroplast inner membrane. The enzyme catalyses K(+)(in) + H(+)(out) = K(+)(out) + H(+)(in). Contributes to K(+)/H(+) antiport activity by supporting proton efflux to control proton extrusion and homeostasis in chloroplasts in a light-dependent manner to modulate photosynthesis. Prevents excessive induction of non-photochemical quenching (NPQ) under continuous-light conditions. Indirectly promotes efficient inorganic carbon uptake into chloroplasts. This Aegilops crassa (Persian goatgrass) protein is Potassium/proton antiporter CemA.